Consider the following 181-residue polypeptide: Putative ankyrin repeat protein RBE_0150 (181 aa).

ANK repeat units lie at residues 50 to 79 (IGQKLLIKATYANDLDLVKALHDKGVKLGT), 83 to 114 (LGRTSLHHAIKAGAGKDLIEFLIDNAGIDINA), 118 to 147 (SGSTLMHWAVNSHHIPAIKLLQTKKADYFT), and 151 to 180 (LGQTPLKLAEYYGHDDVIELLAENSSAGYY).

The polypeptide is Putative ankyrin repeat protein RBE_0150 (Rickettsia bellii (strain RML369-C)).